The chain runs to 245 residues: 1-(5-phosphoribosyl)-5-[(5-phosphoribosylamino)methylideneamino] imidazole-4-carboxamide isomerase (245 aa).

Asp-8 serves as the catalytic Proton acceptor. The active-site Proton donor is Asp-130.

The protein belongs to the HisA/HisF family.

The protein localises to the cytoplasm. It catalyses the reaction 1-(5-phospho-beta-D-ribosyl)-5-[(5-phospho-beta-D-ribosylamino)methylideneamino]imidazole-4-carboxamide = 5-[(5-phospho-1-deoxy-D-ribulos-1-ylimino)methylamino]-1-(5-phospho-beta-D-ribosyl)imidazole-4-carboxamide. It participates in amino-acid biosynthesis; L-histidine biosynthesis; L-histidine from 5-phospho-alpha-D-ribose 1-diphosphate: step 4/9. In Pseudomonas aeruginosa (strain LESB58), this protein is 1-(5-phosphoribosyl)-5-[(5-phosphoribosylamino)methylideneamino] imidazole-4-carboxamide isomerase.